The following is a 348-amino-acid chain: Eukaryotic translation initiation factor 3 subunit F (348 aa).

The MPN domain occupies 30–166 (VVIQPQAIFS…TRTYISAPVG (137 aa)). Residues 312–327 (STAIGGTGAESGGQRG) are compositionally biased toward gly residues. Residues 312–348 (STAIGGTGAESGGQRGGQRNNRQRGGQQRNQAEELRA) form a disordered region. Residues 328–341 (GQRNNRQRGGQQRN) show a composition bias toward low complexity.

It belongs to the eIF-3 subunit F family. In terms of assembly, component of the eukaryotic translation initiation factor 3 (eIF-3) complex.

The protein resides in the cytoplasm. Component of the eukaryotic translation initiation factor 3 (eIF-3) complex, which is involved in protein synthesis of a specialized repertoire of mRNAs and, together with other initiation factors, stimulates binding of mRNA and methionyl-tRNAi to the 40S ribosome. The eIF-3 complex specifically targets and initiates translation of a subset of mRNAs involved in cell proliferation. This Coccidioides immitis (strain RS) (Valley fever fungus) protein is Eukaryotic translation initiation factor 3 subunit F.